The primary structure comprises 190 residues: Adenylate kinase (190 aa).

12–17 serves as a coordination point for ATP; that stretch reads GSGKTT. The interval 33–62 is NMP; that stretch reads STGDLLRAEVASGSELGKTIDSFISKGNLV. Residues Thr34, Arg39, 60–62, 87–90, and Gln94 each bind AMP; these read NLV and GYPR. The LID stretch occupies residues 129-135; the sequence is GRARGAD. ATP is bound at residue Arg130. AMP-binding residues include Arg132 and Arg144. Arg172 provides a ligand contact to ATP.

The protein belongs to the adenylate kinase family. As to quaternary structure, monomer.

The protein localises to the cytoplasm. It catalyses the reaction AMP + ATP = 2 ADP. It functions in the pathway purine metabolism; AMP biosynthesis via salvage pathway; AMP from ADP: step 1/1. Catalyzes the reversible transfer of the terminal phosphate group between ATP and AMP. Plays an important role in cellular energy homeostasis and in adenine nucleotide metabolism. The polypeptide is Adenylate kinase (Campylobacter lari (strain RM2100 / D67 / ATCC BAA-1060)).